The primary structure comprises 310 residues: Inorganic pyrophosphatase, mitochondrial (310 aa).

The N-terminal 30 residues, 1–30 (MNLLRMNALTSKARSIERLKQTLNILSIRN), are a transit peptide targeting the mitochondrion. Aspartate 152, aspartate 157, and aspartate 189 together coordinate Mg(2+).

Belongs to the PPase family. As to quaternary structure, homodimer that binds non-covalently to a protein complex in the inner mitochondrial membrane. Mg(2+) serves as cofactor.

It localises to the mitochondrion. It catalyses the reaction diphosphate + H2O = 2 phosphate + H(+). Involved in energy production. Its activity is stimulated by uncouplers of ATP synthesis. In Saccharomyces cerevisiae (strain ATCC 204508 / S288c) (Baker's yeast), this protein is Inorganic pyrophosphatase, mitochondrial (PPA2).